Here is a 74-residue protein sequence, read N- to C-terminus: Small, acid-soluble spore protein Tlp (74 aa).

The tract at residues 38–74 (AEELSSKEKDELSSKNERRKESVDGLRSEIKDEADSQ) is disordered.

The protein belongs to the Tlp family.

It localises to the spore core. The protein is Small, acid-soluble spore protein Tlp of Oceanobacillus iheyensis (strain DSM 14371 / CIP 107618 / JCM 11309 / KCTC 3954 / HTE831).